The following is a 327-amino-acid chain: tRNA dimethylallyltransferase (327 aa).

Position 14–21 (14–21) interacts with ATP; the sequence is GPTASGKT. Position 16–21 (16–21) interacts with substrate; that stretch reads TASGKT. 2 interaction with substrate tRNA regions span residues 39-42 and 163-167; these read DSAL and QRIQR.

It belongs to the IPP transferase family. As to quaternary structure, monomer. The cofactor is Mg(2+).

The enzyme catalyses adenosine(37) in tRNA + dimethylallyl diphosphate = N(6)-dimethylallyladenosine(37) in tRNA + diphosphate. Catalyzes the transfer of a dimethylallyl group onto the adenine at position 37 in tRNAs that read codons beginning with uridine, leading to the formation of N6-(dimethylallyl)adenosine (i(6)A). This is tRNA dimethylallyltransferase from Xanthomonas campestris pv. campestris (strain 8004).